Reading from the N-terminus, the 323-residue chain is NADH-cytochrome b5 reductase 2 (323 aa).

A helical membrane pass occupies residues leucine 32 to leucine 48. Residues glutamine 72–glutamate 177 enclose the FAD-binding FR-type domain. Lysine 180–leucine 215 is an FAD binding site.

It belongs to the flavoprotein pyridine nucleotide cytochrome reductase family. It depends on FAD as a cofactor.

It localises to the mitochondrion outer membrane. It carries out the reaction 2 Fe(III)-[cytochrome b5] + NADH = 2 Fe(II)-[cytochrome b5] + NAD(+) + H(+). May mediate the reduction of outer membrane cytochrome b5. The polypeptide is NADH-cytochrome b5 reductase 2 (mcr1) (Neosartorya fischeri (strain ATCC 1020 / DSM 3700 / CBS 544.65 / FGSC A1164 / JCM 1740 / NRRL 181 / WB 181) (Aspergillus fischerianus)).